The chain runs to 198 residues: FMN-dependent NADH:quinone oxidoreductase (198 aa).

96–99 lines the FMN pocket; it reads MYNF.

It belongs to the azoreductase type 1 family. In terms of assembly, homodimer. FMN is required as a cofactor.

It catalyses the reaction 2 a quinone + NADH + H(+) = 2 a 1,4-benzosemiquinone + NAD(+). It carries out the reaction N,N-dimethyl-1,4-phenylenediamine + anthranilate + 2 NAD(+) = 2-(4-dimethylaminophenyl)diazenylbenzoate + 2 NADH + 2 H(+). Its function is as follows. Quinone reductase that provides resistance to thiol-specific stress caused by electrophilic quinones. Also exhibits azoreductase activity. Catalyzes the reductive cleavage of the azo bond in aromatic azo compounds to the corresponding amines. The chain is FMN-dependent NADH:quinone oxidoreductase from Burkholderia thailandensis (strain ATCC 700388 / DSM 13276 / CCUG 48851 / CIP 106301 / E264).